The chain runs to 74 residues: Class I heat shock protein (74 aa).

The disordered stretch occupies residues 1–20 (ILQISGERNVEKEDKNDTWH). The region spanning 1-74 (ILQISGERNV…PDVKAIEISG (74 aa)) is the sHSP domain. Basic and acidic residues predominate over residues 8-20 (RNVEKEDKNDTWH).

It belongs to the small heat shock protein (HSP20) family. In terms of assembly, forms oligomeric structures.

The protein localises to the cytoplasm. This chain is Class I heat shock protein (HSP6834-A), found in Glycine max (Soybean).